The chain runs to 450 residues: Tubulin alpha-1 chain (450 aa).

Residues glutamine 11, glutamate 71, glycine 144, threonine 145, threonine 179, asparagine 206, and asparagine 228 each contribute to the GTP site. Glutamate 71 contributes to the Mg(2+) binding site. The active site involves glutamate 254.

Belongs to the tubulin family. In terms of assembly, dimer of alpha and beta chains. A typical microtubule is a hollow water-filled tube with an outer diameter of 25 nm and an inner diameter of 15 nM. Alpha-beta heterodimers associate head-to-tail to form protofilaments running lengthwise along the microtubule wall with the beta-tubulin subunit facing the microtubule plus end conferring a structural polarity. Microtubules usually have 13 protofilaments but different protofilament numbers can be found in some organisms and specialized cells. Requires Mg(2+) as cofactor. In terms of processing, undergoes a tyrosination/detyrosination cycle, the cyclic removal and re-addition of a C-terminal tyrosine residue by the enzymes tubulin tyrosine carboxypeptidase (TTCP) and tubulin tyrosine ligase (TTL), respectively.

It is found in the cytoplasm. The protein resides in the cytoskeleton. The catalysed reaction is GTP + H2O = GDP + phosphate + H(+). Tubulin is the major constituent of microtubules, a cylinder consisting of laterally associated linear protofilaments composed of alpha- and beta-tubulin heterodimers. Microtubules grow by the addition of GTP-tubulin dimers to the microtubule end, where a stabilizing cap forms. Below the cap, tubulin dimers are in GDP-bound state, owing to GTPase activity of alpha-tubulin. The protein is Tubulin alpha-1 chain (TUBA1) of Oryza sativa subsp. japonica (Rice).